Here is an 806-residue protein sequence, read N- to C-terminus: Mitogen-activated protein kinase 7 (806 aa).

A disordered region spans residues 1-23; it reads MAEPLKEEDGEDGSGEPPGRVKA. An N-acetylalanine modification is found at Ala-2. The tract at residues 2 to 77 is required for cytoplasmic targeting; sequence AEPLKEEDGE…VVSSARRRLT (76 aa). The 293-residue stretch at 55–347 folds into the Protein kinase domain; that stretch reads YEIIETIGNG…AAAALRHPFL (293 aa). ATP contacts are provided by residues 61-69 and Lys-84; that span reads IGNGAYGVV. Residues 78-139 form a required for binding to MAP2K5 region; it reads GQQVAIKKIP…FRSVYVVLDL (62 aa). The necessary for oligomerization stretch occupies residues 140-406; the sequence is MESDLHQIIH…QQIRFQPSLQ (267 aa). The active-site Proton acceptor is the Asp-182. The TXY motif lies at 219 to 221; it reads TEY. Positions 407 to 806 are may not be required for kinase activity; required to stimulate MEF2C activity; it reads PVASEPVCPD…LSDLPDLQEP (400 aa). Disordered regions lie at residues 424-475 and 488-727; these read APSG…SDNT and RSRL…PKGS. The segment covering 433-443 has biased composition (pro residues); the sequence is SPPPALPPCSG. 3 stretches are compositionally biased toward basic and acidic residues: residues 502 to 519, 527 to 544, and 563 to 573; these read PEPR…EREE, RAKE…KERG, and DNDRSLLERWT. The Nuclear localization signal signature appears at 505–539; the sequence is RKPVTAQERQREREEKRRRRQERAKEREKRRQERE. Composition is skewed to pro residues over residues 578–592 and 627–643; these read PPVP…PTPK and VCPP…PVPA. Residues 647 to 660 show a composition bias toward polar residues; the sequence is TAPSTSLLASQSLV. Residues 678–689 show a composition bias toward pro residues; the sequence is PSGPPPPDPGLT. The span at 693–710 shows a compositional bias: polar residues; the sequence is STSESPDVNLVTQQLSKS. Ser-710 bears the Phosphoserine mark. The residue at position 723 (Thr-723) is a Phosphothreonine.

This sequence belongs to the protein kinase superfamily. CMGC Ser/Thr protein kinase family. MAP kinase subfamily. Interacts with MAP2K5. Forms oligomers. Interacts with MEF2A, MEF2C and MEF2D; the interaction phosphorylates the MEF2s and enhances transcriptional activity of MEF2A, MEF2C but not MEF2D. Interacts with SGK1. Interacts with PML. Interacts (via N-terminal half) with HSP90AB1-CDC37 chaperone complex in resting cells; the interaction is MAP2K5-independent and prevents MAPK7 from ubiquitination and proteasomal degradation. Interacts with STUB1/CHIP; the interaction is enhanced in the presence of IGF1 or MAP2K5 and promotes STUB1/CHIP E3 ligase activity. Mg(2+) is required as a cofactor. Dually phosphorylated on Thr-219 and Tyr-221, which activates the enzyme.

It is found in the cytoplasm. The protein resides in the nucleus. It localises to the PML body. It catalyses the reaction L-seryl-[protein] + ATP = O-phospho-L-seryl-[protein] + ADP + H(+). The catalysed reaction is L-threonyl-[protein] + ATP = O-phospho-L-threonyl-[protein] + ADP + H(+). With respect to regulation, activated by tyrosine and threonine phosphorylation. Activated in response to hyperosmolarity, hydrogen peroxide, and epidermal growth factor (EGF). Its function is as follows. Plays a role in various cellular processes such as proliferation, differentiation and cell survival. The upstream activator of MAPK7 is the MAPK kinase MAP2K5. Upon activation, it translocates to the nucleus and phosphorylates various downstream targets including MEF2C. EGF activates MAPK7 through a Ras-independent and MAP2K5-dependent pathway. As part of the MAPK/ERK signaling pathway, acts as a negative regulator of apoptosis in cardiomyocytes via interaction with STUB1/CHIP and promotion of STUB1-mediated ubiquitination and degradation of ICER-type isoforms of CREM. May have a role in muscle cell differentiation. May be important for endothelial function and maintenance of blood vessel integrity. MAP2K5 and MAPK7 interact specifically with one another and not with MEK1/ERK1 or MEK2/ERK2 pathways. Phosphorylates SGK1 at Ser-78 and this is required for growth factor-induced cell cycle progression. Involved in the regulation of p53/TP53 by disrupting the PML-MDM2 interaction. This Rattus norvegicus (Rat) protein is Mitogen-activated protein kinase 7 (Mapk7).